Consider the following 1362-residue polypeptide: DNA-directed RNA polymerase subunit beta' (1362 aa).

Positions 1–14 (MTSSSKSRKSKSSK) are enriched in basic residues. The interval 1–39 (MTSSSKSRKSKSSKASKAAKEAPVSASRPLSKTPPPFRN) is disordered. A compositionally biased stretch (low complexity) spans 15–27 (ASKAAKEAPVSAS). Cys-248, Cys-315, Cys-322, and Cys-325 together coordinate Zn(2+). Residues 1316 to 1336 (TRHNIDPSASNFAAFTRPDAD) form a disordered region.

This sequence belongs to the RNA polymerase beta' chain family. RpoC2 subfamily. As to quaternary structure, in cyanobacteria the RNAP catalytic core is composed of 2 alpha, 1 beta, 1 beta', 1 gamma and 1 omega subunit. When a sigma factor is associated with the core the holoenzyme is formed, which can initiate transcription. Zn(2+) is required as a cofactor.

The enzyme catalyses RNA(n) + a ribonucleoside 5'-triphosphate = RNA(n+1) + diphosphate. DNA-dependent RNA polymerase catalyzes the transcription of DNA into RNA using the four ribonucleoside triphosphates as substrates. In Synechococcus sp. (strain CC9605), this protein is DNA-directed RNA polymerase subunit beta'.